We begin with the raw amino-acid sequence, 150 residues long: D-aminoacyl-tRNA deacylase (150 aa).

A Gly-cisPro motif, important for rejection of L-amino acids motif is present at residues Gly-138 to Pro-139.

It belongs to the DTD family. Homodimer.

It is found in the cytoplasm. The enzyme catalyses glycyl-tRNA(Ala) + H2O = tRNA(Ala) + glycine + H(+). The catalysed reaction is a D-aminoacyl-tRNA + H2O = a tRNA + a D-alpha-amino acid + H(+). Its function is as follows. An aminoacyl-tRNA editing enzyme that deacylates mischarged D-aminoacyl-tRNAs. Also deacylates mischarged glycyl-tRNA(Ala), protecting cells against glycine mischarging by AlaRS. Acts via tRNA-based rather than protein-based catalysis; rejects L-amino acids rather than detecting D-amino acids in the active site. By recycling D-aminoacyl-tRNA to D-amino acids and free tRNA molecules, this enzyme counteracts the toxicity associated with the formation of D-aminoacyl-tRNA entities in vivo and helps enforce protein L-homochirality. The sequence is that of D-aminoacyl-tRNA deacylase from Chlorobium phaeobacteroides (strain DSM 266 / SMG 266 / 2430).